A 255-amino-acid polypeptide reads, in one-letter code: Imidazole glycerol phosphate synthase subunit HisF (255 aa).

Active-site residues include D11 and D130.

The protein belongs to the HisA/HisF family. As to quaternary structure, heterodimer of HisH and HisF.

It is found in the cytoplasm. It catalyses the reaction 5-[(5-phospho-1-deoxy-D-ribulos-1-ylimino)methylamino]-1-(5-phospho-beta-D-ribosyl)imidazole-4-carboxamide + L-glutamine = D-erythro-1-(imidazol-4-yl)glycerol 3-phosphate + 5-amino-1-(5-phospho-beta-D-ribosyl)imidazole-4-carboxamide + L-glutamate + H(+). It functions in the pathway amino-acid biosynthesis; L-histidine biosynthesis; L-histidine from 5-phospho-alpha-D-ribose 1-diphosphate: step 5/9. In terms of biological role, IGPS catalyzes the conversion of PRFAR and glutamine to IGP, AICAR and glutamate. The HisF subunit catalyzes the cyclization activity that produces IGP and AICAR from PRFAR using the ammonia provided by the HisH subunit. In Akkermansia muciniphila (strain ATCC BAA-835 / DSM 22959 / JCM 33894 / BCRC 81048 / CCUG 64013 / CIP 107961 / Muc), this protein is Imidazole glycerol phosphate synthase subunit HisF.